Reading from the N-terminus, the 909-residue chain is Coatomer subunit beta'-3 (909 aa).

WD repeat units lie at residues 13-52 (QRSERVKSVDLHPTEPWILASLYSGTVCIWNYQTQTITKS), 55-94 (VTELPVRSAKFIPRKQWVVAGADDMYIRVYNYNTMDKVKV), 97-136 (AHSDYIRCVAVHPTLPYVLSSSDDMLIKLWDWENGWACTQ), 140-180 (GHSH…PNFT), 183-224 (AHQK…CVQT), 227-266 (GHTHNVSAVCFHPELPIIITGSEDGTVRIWHATTYRLENT), 269-309 (YGLE…ASMD), 351-390 (TCDLYPQSLKHNPNGRFVVVCGDGEYIIYTALAWRNRSFG), and 461-501 (QIDV…SHFD). The disordered stretch occupies residues 862-909 (EENGHVENEGDEEEQQEEEVNEEEGVVDADSTDGAVLVNGSEVLTPHP). Over residues 870–892 (EGDEEEQQEEEVNEEEGVVDADS) the composition is skewed to acidic residues.

Belongs to the WD repeat COPB2 family. As to quaternary structure, oligomeric complex that consists of at least the alpha, beta, beta', gamma, delta, epsilon and zeta subunits.

The protein resides in the cytoplasm. Its subcellular location is the golgi apparatus membrane. It is found in the cytoplasmic vesicle. It localises to the COPI-coated vesicle membrane. In terms of biological role, the coatomer is a cytosolic protein complex that binds to dilysine motifs and reversibly associates with Golgi non-clathrin-coated vesicles, which further mediate biosynthetic protein transport from the ER, via the Golgi up to the trans Golgi network. Coatomer complex is required for budding from Golgi membranes, and is essential for the retrograde Golgi-to-ER transport of dilysine-tagged proteins. The polypeptide is Coatomer subunit beta'-3 (Arabidopsis thaliana (Mouse-ear cress)).